Reading from the N-terminus, the 257-residue chain is Deoxyribose-phosphate aldolase (257 aa).

Aspartate 102 serves as the catalytic Proton donor/acceptor. Residue lysine 166 is the Schiff-base intermediate with acetaldehyde of the active site. Lysine 198 (proton donor/acceptor) is an active-site residue.

The protein belongs to the DeoC/FbaB aldolase family. DeoC type 2 subfamily.

Its subcellular location is the cytoplasm. It carries out the reaction 2-deoxy-D-ribose 5-phosphate = D-glyceraldehyde 3-phosphate + acetaldehyde. It participates in carbohydrate degradation; 2-deoxy-D-ribose 1-phosphate degradation; D-glyceraldehyde 3-phosphate and acetaldehyde from 2-deoxy-alpha-D-ribose 1-phosphate: step 2/2. In terms of biological role, catalyzes a reversible aldol reaction between acetaldehyde and D-glyceraldehyde 3-phosphate to generate 2-deoxy-D-ribose 5-phosphate. This Shewanella woodyi (strain ATCC 51908 / MS32) protein is Deoxyribose-phosphate aldolase.